Reading from the N-terminus, the 329-residue chain is Helicase VP6-A (329 aa).

Disordered stretches follow at residues N28 to G130 and D189 to P232. 3 stretches are compositionally biased toward basic and acidic residues: residues E36 to E58, G65 to I83, and S96 to G109. Residue K110 participates in ATP binding. Positions K110–G129 are enriched in gly residues. 2 stretches are compositionally biased toward basic and acidic residues: residues D189 to G207 and H215 to P232.

This sequence belongs to the reoviruses VP6 family. As to quaternary structure, homohexamer.

It is found in the virion. The catalysed reaction is ATP + H2O = ADP + phosphate + H(+). In terms of biological role, ATP dependent RNA helicase essential for RNA packaging and viral transcription. Possesses ss- and dsRNA-binding capacity. The chain is Helicase VP6-A (Segment-9) from Bluetongue virus 10 (isolate USA) (BTV 10).